The chain runs to 1167 residues: RNA-directed RNA polymerase (1167 aa).

One can recognise a RdRp catalytic domain in the interval 553 to 735 (LTYGILAEAT…KALASYTGLE (183 aa)).

This sequence belongs to the reoviridae RNA-directed RNA polymerase family. As to quaternary structure, interacts with VP3 (Potential). Interacts with VP2 (Potential). Interacts with NSP5; this interaction is probably necessary for the formation of functional virus factories.

Its subcellular location is the virion. It carries out the reaction RNA(n) + a ribonucleoside 5'-triphosphate = RNA(n+1) + diphosphate. Functionally, RNA-directed RNA polymerase that is involved in both transcription and genome replication. Together with VP3 capping enzyme, forms an enzyme complex positioned near the channels situated at each of the five-fold vertices of the core. Following infection, the outermost layer of the virus is lost, leaving a double-layered particle (DLP) made up of the core and VP6 shell. VP1 then catalyzes the transcription of fully conservative plus-strand genomic RNAs that are extruded through the DLP's channels into the cytoplasm where they function as mRNAs for translation of viral proteins. One copy of each of the viral (+)RNAs is also recruited during core assembly, together with newly synthesized polymerase complexes and VP2. The polymerase of these novo-formed particles catalyzes the synthesis of complementary minus-strands leading to dsDNA formation. To do so, the polymerase specifically recognizes conserved 3' sequence(s) in plus-strand RNA templates. Once dsRNA synthesis is complete, the polymerase switches to the transcriptional mode, thus providing secondary transcription. This is RNA-directed RNA polymerase from Rotavirus X (strain RVX/Human/China/NADRV-J19/1997/GXP[X]) (RV ADRV-N).